A 365-amino-acid chain; its full sequence is Chorismate synthase (365 aa).

An NADP(+)-binding site is contributed by R46. FMN is bound by residues R123–S125, N241–G242, G281, K296–S300, and R322.

The protein belongs to the chorismate synthase family. As to quaternary structure, homotetramer. It depends on FMNH2 as a cofactor.

It carries out the reaction 5-O-(1-carboxyvinyl)-3-phosphoshikimate = chorismate + phosphate. The protein operates within metabolic intermediate biosynthesis; chorismate biosynthesis; chorismate from D-erythrose 4-phosphate and phosphoenolpyruvate: step 7/7. Its function is as follows. Catalyzes the anti-1,4-elimination of the C-3 phosphate and the C-6 proR hydrogen from 5-enolpyruvylshikimate-3-phosphate (EPSP) to yield chorismate, which is the branch point compound that serves as the starting substrate for the three terminal pathways of aromatic amino acid biosynthesis. This reaction introduces a second double bond into the aromatic ring system. In Helicobacter pylori (strain G27), this protein is Chorismate synthase.